The sequence spans 276 residues: Outer membrane lipoprotein 2 (276 aa).

The N-terminal stretch at 1 to 19 is a signal peptide; the sequence is MNFKKLLGVALVSALALTA. Residue C20 is the site of N-palmitoyl cysteine attachment. The S-diacylglycerol cysteine moiety is linked to residue C20.

The protein belongs to the NlpA lipoprotein family.

It localises to the cell outer membrane. In Mannheimia haemolytica (Pasteurella haemolytica), this protein is Outer membrane lipoprotein 2 (plpB).